We begin with the raw amino-acid sequence, 340 residues long: RNA 3'-terminal phosphate cyclase (340 aa).

Residues Q102 and 284-288 contribute to the ATP site; that span reads FLGDQ. Residue H308 is the Tele-AMP-histidine intermediate of the active site.

It belongs to the RNA 3'-terminal cyclase family. Type 1 subfamily.

It is found in the cytoplasm. The catalysed reaction is a 3'-end 3'-phospho-ribonucleotide-RNA + ATP = a 3'-end 2',3'-cyclophospho-ribonucleotide-RNA + AMP + diphosphate. Its function is as follows. Catalyzes the conversion of 3'-phosphate to a 2',3'-cyclic phosphodiester at the end of RNA. The mechanism of action of the enzyme occurs in 3 steps: (A) adenylation of the enzyme by ATP; (B) transfer of adenylate to an RNA-N3'P to produce RNA-N3'PP5'A; (C) and attack of the adjacent 2'-hydroxyl on the 3'-phosphorus in the diester linkage to produce the cyclic end product. The biological role of this enzyme is unknown but it is likely to function in some aspects of cellular RNA processing. The sequence is that of RNA 3'-terminal phosphate cyclase from Thermococcus onnurineus (strain NA1).